Reading from the N-terminus, the 266-residue chain is UPF0354 protein lin1649 (266 aa).

Belongs to the UPF0354 family.

This is UPF0354 protein lin1649 from Listeria innocua serovar 6a (strain ATCC BAA-680 / CLIP 11262).